A 149-amino-acid chain; its full sequence is MSESVQSNSAVLVHFTLKLDDGTTAESTRNNGKPALFRLGDASLSEGLEQHLLGLKVGDKTTFSLEPDAAFGVPSPDLIQYFSRREFMDAGEPEIGAIMLFTAMDGSEMPGVIREINGDSITVDFNHPLAGQTVHFDIEVLEIDPALEA.

The 71-residue stretch at 2-72 (SESVQSNSAV…FSLEPDAAFG (71 aa)) folds into the PPIase FKBP-type domain.

The protein belongs to the FKBP-type PPIase family.

It catalyses the reaction [protein]-peptidylproline (omega=180) = [protein]-peptidylproline (omega=0). Its function is as follows. PPIases accelerate the folding of proteins. Substrate specificity carried out with 'Suc-Ala-Xaa-Pro-Phe-4-nitroanilide', where Xaa is the amino acid tested, was found to be Phe &gt; Leu &gt;&gt; Ile &gt; Lys = Ala &gt; Trp &gt; His &gt;&gt; Gln. In Escherichia coli O6:H1 (strain CFT073 / ATCC 700928 / UPEC), this protein is FKBP-type 16 kDa peptidyl-prolyl cis-trans isomerase (fkpB).